A 202-amino-acid chain; its full sequence is MRNVSMTQRISEVVRNTNETKIRVRLNLDGTGQGTLNTGVPFLDHMIDQIKRHGLFDIDIHCDGDLEIDDHHTVEDCGITLGQAFAQALGDKKGLRRYGHFYAPLDEALSRVVVDLSGRPGLFMDIPFTRARIGTFDVDLFSEFFQGFVNHALMTLHIDNLKGKNSHHQIESVFKALARALRMACEIDPRAENTIASTKGSL.

Belongs to the imidazoleglycerol-phosphate dehydratase family.

The protein resides in the cytoplasm. It carries out the reaction D-erythro-1-(imidazol-4-yl)glycerol 3-phosphate = 3-(imidazol-4-yl)-2-oxopropyl phosphate + H2O. The protein operates within amino-acid biosynthesis; L-histidine biosynthesis; L-histidine from 5-phospho-alpha-D-ribose 1-diphosphate: step 6/9. This chain is Imidazoleglycerol-phosphate dehydratase, found in Acinetobacter baumannii (strain AYE).